The following is a 180-amino-acid chain: Negative modulator of initiation of replication (180 aa).

3 interaction with DNA regions span residues 86-87 (AV), 115-119 (RTRVY), and 149-155 (NTNTGRK).

This sequence belongs to the SeqA family. In terms of assembly, homodimer. Polymerizes to form helical filaments.

It is found in the cytoplasm. Its function is as follows. Negative regulator of replication initiation, which contributes to regulation of DNA replication and ensures that replication initiation occurs exactly once per chromosome per cell cycle. Binds to pairs of hemimethylated GATC sequences in the oriC region, thus preventing assembly of replication proteins and re-initiation at newly replicated origins. Repression is relieved when the region becomes fully methylated. The chain is Negative modulator of initiation of replication from Salmonella typhimurium (strain LT2 / SGSC1412 / ATCC 700720).